A 352-amino-acid polypeptide reads, in one-letter code: Molybdenum import ATP-binding protein ModC (352 aa).

The ABC transporter domain maps to Met-1–Glu-229. An ATP-binding site is contributed by Gly-31 to Thr-38. The Mop domain occupies Gln-289–Ala-352.

The protein belongs to the ABC transporter superfamily. Molybdate importer (TC 3.A.1.8) family. In terms of assembly, the complex is composed of two ATP-binding proteins (ModC), two transmembrane proteins (ModB) and a solute-binding protein (ModA).

It is found in the cell inner membrane. The enzyme catalyses molybdate(out) + ATP + H2O = molybdate(in) + ADP + phosphate + H(+). Part of the ABC transporter complex ModABC involved in molybdenum import. Responsible for energy coupling to the transport system. This Escherichia coli O6:H1 (strain CFT073 / ATCC 700928 / UPEC) protein is Molybdenum import ATP-binding protein ModC.